Here is a 495-residue protein sequence, read N- to C-terminus: Transcription termination/antitermination protein NusA (495 aa).

An S1 motif domain is found at 135–200 (GEIITGVVKK…RGAQLFVTRS (66 aa)). The KH domain maps to 302–368 (KHTMDIAVEA…FTKYLDIDED (67 aa)). 2 consecutive repeat copies span residues 364 to 414 (DIDE…KNAL) and 439 to 489 (GVDR…RNIC). The interval 364 to 489 (DIDEDFATVL…ALIMAARNIC (126 aa)) is 2 X 51 AA approximate repeats.

Belongs to the NusA family. In terms of assembly, monomer. Binds directly to the core enzyme of the DNA-dependent RNA polymerase and to nascent RNA.

It localises to the cytoplasm. In terms of biological role, participates in both transcription termination and antitermination. The protein is Transcription termination/antitermination protein NusA of Shigella flexneri.